Reading from the N-terminus, the 884-residue chain is Microsomal triglyceride transfer protein large subunit (884 aa).

The N-terminal stretch at 1-21 (MMPVAGLLLCVTAVLCTSALG) is a signal peptide. A Vitellogenin domain is found at 26–660 (LDNGKLYRYS…QSNNALLHGL (635 aa)). A disulfide bond links C172 and C192. N348 is a glycosylation site (N-linked (GlcNAc...) asparagine). Cysteines 438 and 443 form a disulfide. A glycan (N-linked (GlcNAc...) asparagine) is linked at N787.

As to quaternary structure, heterodimer; heterodimerizes with the protein disulfide isomerase. As to expression, highest expression in the proximal part of the anterior intestine. Lower expression in the distal part of the anterior intestine, in the posterior portion of the intestinal tube and liver. Very low expression levels in heart, brain, ovary, testis and kidney.

The protein resides in the endoplasmic reticulum. It is found in the golgi apparatus. The enzyme catalyses a 1,2-diacyl-sn-glycero-3-phosphocholine(in) = a 1,2-diacyl-sn-glycero-3-phosphocholine(out). It catalyses the reaction a 1,2-diacyl-sn-glycero-3-phosphoethanolamine(in) = a 1,2-diacyl-sn-glycero-3-phosphoethanolamine(out). The catalysed reaction is a cholesterol ester(in) = a cholesterol ester(out). It carries out the reaction a triacyl-sn-glycerol(in) = a triacyl-sn-glycerol(out). With respect to regulation, inhibited by naringenin. Catalyzes the transport of triglyceride between phospholipid surfaces. Catalyzes the transport of cholesteryl ester, and phospholipid between phospholipid surfaces. Required for the assembly and secretion of plasma lipoproteins that contain apolipoprotein B. Required for yolk lipid utilization and absorption of dietary lipids in larvae. The chain is Microsomal triglyceride transfer protein large subunit from Danio rerio (Zebrafish).